The following is a 155-amino-acid chain: MITTEGTRSLETLDIEKLLSILPHRYPFLLIDRIVEIDGEQEAIGIKNITINEPHFVGHFPAKPVMPGVLILEAMAQTAGAISLLRLGNKQTNLVYLMTVDNAKFRKPVIPGDQLKIHVRLLKKRSGMRRFSCIAEVKGVRVAEAEIAAMILEKE.

Residue histidine 59 is part of the active site.

It belongs to the thioester dehydratase family. FabZ subfamily.

The protein localises to the cytoplasm. The enzyme catalyses a (3R)-hydroxyacyl-[ACP] = a (2E)-enoyl-[ACP] + H2O. Its function is as follows. Involved in unsaturated fatty acids biosynthesis. Catalyzes the dehydration of short chain beta-hydroxyacyl-ACPs and long chain saturated and unsaturated beta-hydroxyacyl-ACPs. The polypeptide is 3-hydroxyacyl-[acyl-carrier-protein] dehydratase FabZ (Bartonella henselae (strain ATCC 49882 / DSM 28221 / CCUG 30454 / Houston 1) (Rochalimaea henselae)).